The chain runs to 147 residues: Peroxynitrite isomerase (147 aa).

Residue His137 participates in heme b binding.

This sequence belongs to the nitrobindin family. As to quaternary structure, homodimer. Heme b serves as cofactor.

The enzyme catalyses peroxynitrite = nitrate. The protein operates within nitrogen metabolism. In terms of biological role, heme-binding protein able to scavenge peroxynitrite and to protect free L-tyrosine against peroxynitrite-mediated nitration, by acting as a peroxynitrite isomerase that converts peroxynitrite to nitrate. Therefore, this protein likely plays a role in peroxynitrite sensing and in the detoxification of reactive nitrogen and oxygen species (RNS and ROS, respectively). Is able to bind nitric oxide (NO) in vitro, but may act as a sensor of peroxynitrite levels in vivo. The polypeptide is Peroxynitrite isomerase (Frankia alni (strain DSM 45986 / CECT 9034 / ACN14a)).